The primary structure comprises 332 residues: Large ribosomal subunit protein mL44 (332 aa).

Residues 1-30 constitute a mitochondrion transit peptide; sequence MASGLVRLLQQGHRCLLAPVAPKLVPPVRG. In terms of domain architecture, RNase III spans 86–228; sequence DLLKTAFVNS…LITQMTGKEL (143 aa). The DRBM domain occupies 236 to 306; the sequence is NPMGLLVEEL…ARVALRKLYG (71 aa).

Belongs to the ribonuclease III family. Mitochondrion-specific ribosomal protein mL44 subfamily. As to quaternary structure, component of the mitochondrial large ribosomal subunit (mt-LSU). Mature mammalian 55S mitochondrial ribosomes consist of a small (28S) and a large (39S) subunit. The 28S small subunit contains a 12S ribosomal RNA (12S mt-rRNA) and 30 different proteins. The 39S large subunit contains a 16S rRNA (16S mt-rRNA), a copy of mitochondrial valine transfer RNA (mt-tRNA(Val)), which plays an integral structural role, and 52 different proteins.

It localises to the mitochondrion. Functionally, component of the 39S subunit of mitochondrial ribosome. May have a function in the assembly/stability of nascent mitochondrial polypeptides exiting the ribosome. This chain is Large ribosomal subunit protein mL44 (MRPL44), found in Homo sapiens (Human).